The primary structure comprises 266 residues: Phosphatidylglycerol--prolipoprotein diacylglyceryl transferase (266 aa).

7 helical membrane-spanning segments follow: residues 17–37 (LKIH…WLLA), 56–76 (LVFW…VLFY), 92–112 (WKGG…VWWF), 120–140 (FFQL…AGRI), 171–191 (PSQL…LWLF), 199–219 (ASVS…VEFV), and 233–253 (WLTM…ALMV). Arg139 contacts a 1,2-diacyl-sn-glycero-3-phospho-(1'-sn-glycerol).

It belongs to the Lgt family.

Its subcellular location is the cell inner membrane. It carries out the reaction L-cysteinyl-[prolipoprotein] + a 1,2-diacyl-sn-glycero-3-phospho-(1'-sn-glycerol) = an S-1,2-diacyl-sn-glyceryl-L-cysteinyl-[prolipoprotein] + sn-glycerol 1-phosphate + H(+). Its pathway is protein modification; lipoprotein biosynthesis (diacylglyceryl transfer). Functionally, catalyzes the transfer of the diacylglyceryl group from phosphatidylglycerol to the sulfhydryl group of the N-terminal cysteine of a prolipoprotein, the first step in the formation of mature lipoproteins. This chain is Phosphatidylglycerol--prolipoprotein diacylglyceryl transferase, found in Pseudomonas aeruginosa (strain UCBPP-PA14).